Here is a 448-residue protein sequence, read N- to C-terminus: L-seryl-tRNA(Sec) selenium transferase (448 aa).

Lys-284 carries the N6-(pyridoxal phosphate)lysine modification.

This sequence belongs to the SelA family. It depends on pyridoxal 5'-phosphate as a cofactor.

The protein localises to the cytoplasm. The catalysed reaction is L-seryl-tRNA(Sec) + selenophosphate + H(+) = L-selenocysteinyl-tRNA(Sec) + phosphate. It participates in aminoacyl-tRNA biosynthesis; selenocysteinyl-tRNA(Sec) biosynthesis; selenocysteinyl-tRNA(Sec) from L-seryl-tRNA(Sec) (bacterial route): step 1/1. In terms of biological role, converts seryl-tRNA(Sec) to selenocysteinyl-tRNA(Sec) required for selenoprotein biosynthesis. The chain is L-seryl-tRNA(Sec) selenium transferase from Nautilia profundicola (strain ATCC BAA-1463 / DSM 18972 / AmH).